The chain runs to 514 residues: 2,3-bisphosphoglycerate-independent phosphoglycerate mutase (514 aa).

Positions 14 and 64 each coordinate Mn(2+). The active-site Phosphoserine intermediate is serine 64. Residues histidine 125, 155–156 (RD), arginine 187, arginine 193, 263–266 (RADR), and lysine 336 contribute to the substrate site. The Mn(2+) site is built by aspartate 403, histidine 407, aspartate 444, histidine 445, and histidine 463.

This sequence belongs to the BPG-independent phosphoglycerate mutase family. Monomer. It depends on Mn(2+) as a cofactor.

It catalyses the reaction (2R)-2-phosphoglycerate = (2R)-3-phosphoglycerate. The protein operates within carbohydrate degradation; glycolysis; pyruvate from D-glyceraldehyde 3-phosphate: step 3/5. Catalyzes the interconversion of 2-phosphoglycerate and 3-phosphoglycerate. This Shewanella sp. (strain W3-18-1) protein is 2,3-bisphosphoglycerate-independent phosphoglycerate mutase.